The primary structure comprises 120 residues: NAD(P)H-quinone oxidoreductase subunit 3, chloroplastic (120 aa).

A run of 3 helical transmembrane segments spans residues 9–29, 64–84, and 88–108; these read IFWT…LISG, MFAL…PWAM, and VLGV…IVGS.

It belongs to the complex I subunit 3 family. NDH is composed of at least 16 different subunits, 5 of which are encoded in the nucleus.

The protein resides in the plastid. The protein localises to the chloroplast thylakoid membrane. The catalysed reaction is a plastoquinone + NADH + (n+1) H(+)(in) = a plastoquinol + NAD(+) + n H(+)(out). The enzyme catalyses a plastoquinone + NADPH + (n+1) H(+)(in) = a plastoquinol + NADP(+) + n H(+)(out). Its function is as follows. NDH shuttles electrons from NAD(P)H:plastoquinone, via FMN and iron-sulfur (Fe-S) centers, to quinones in the photosynthetic chain and possibly in a chloroplast respiratory chain. The immediate electron acceptor for the enzyme in this species is believed to be plastoquinone. Couples the redox reaction to proton translocation, and thus conserves the redox energy in a proton gradient. The protein is NAD(P)H-quinone oxidoreductase subunit 3, chloroplastic of Piper cenocladum (Ant piper).